We begin with the raw amino-acid sequence, 303 residues long: tRNA pseudouridine synthase B (303 aa).

Residue aspartate 38 is the Nucleophile of the active site.

It belongs to the pseudouridine synthase TruB family. Type 1 subfamily.

It catalyses the reaction uridine(55) in tRNA = pseudouridine(55) in tRNA. Its function is as follows. Responsible for synthesis of pseudouridine from uracil-55 in the psi GC loop of transfer RNAs. The sequence is that of tRNA pseudouridine synthase B from Levilactobacillus brevis (strain ATCC 367 / BCRC 12310 / CIP 105137 / JCM 1170 / LMG 11437 / NCIMB 947 / NCTC 947) (Lactobacillus brevis).